The chain runs to 365 residues: MGYCDGKWTPVIIMVMINSALGLANALVKKVLDGGVNHMVIATYRLAISTLFLAPIAFFWERKTRPTLTLNILVQLFFSALVGASLTQYFFLLGLSYTSATLACAFISMTPAITFVMALIFRVEKLNMKSKAGMGMVMGALICIGGALLLTMYKGVPLTKLRKLETHQLINNNHAMKPENWIIGCVLLFAGSSCFGSWMLIQAKVNEKYPCQYSSTVVLSFFGTIQCALLSLIKSRDITAWILTDKLDIVTIVYAGAVAQGICTVGTSWCIRKRGPIFTSIFTPVGLIFATLFDFLILHRQIFLGSVVGSGVVIFGLYIFLLGKVRLMKEECEKKLPCRFNEDDQEEDDDEQYKKGHLMVVPMTP.

10 consecutive transmembrane segments (helical) span residues 8–28 (WTPV…NALV), 40–60 (VIAT…AFFW), 72–92 (ILVQ…YFFL), 101–121 (TLAC…ALIF), 132–152 (AGMG…LLTM), 181–201 (WIIG…WMLI), 213–233 (YSST…LSLI), 249–269 (IVTI…GTSW), 277–297 (IFTS…DFLI), and 302–322 (IFLG…IFLL). 2 EamA domains span residues 25 to 144 (NALV…LICI) and 196 to 321 (GSWM…YIFL).

Belongs to the drug/metabolite transporter (DMT) superfamily. Plant drug/metabolite exporter (P-DME) (TC 2.A.7.4) family.

The protein localises to the membrane. In Arabidopsis thaliana (Mouse-ear cress), this protein is WAT1-related protein At4g01440.